A 125-amino-acid chain; its full sequence is Holo-[acyl-carrier-protein] synthase (125 aa).

Mg(2+) is bound by residues D8 and E57.

It belongs to the P-Pant transferase superfamily. AcpS family. The cofactor is Mg(2+).

The protein localises to the cytoplasm. The enzyme catalyses apo-[ACP] + CoA = holo-[ACP] + adenosine 3',5'-bisphosphate + H(+). In terms of biological role, transfers the 4'-phosphopantetheine moiety from coenzyme A to a Ser of acyl-carrier-protein. This is Holo-[acyl-carrier-protein] synthase from Neisseria meningitidis serogroup A / serotype 4A (strain DSM 15465 / Z2491).